The sequence spans 800 residues: DEP domain-containing protein 1A (800 aa).

Residues 24 to 108 enclose the DEP domain; that stretch reads FRAGMPLKKH…DNSQLYRFPS (85 aa). 3 disordered regions span residues 147–173, 306–326, and 459–485; these read ETLE…RSRE, SQPG…AKNP, and INTS…ARAR. Residues 281-321 enclose the Rho-GAP domain; the sequence is PLLTYQYYELFVNILVMCGYITTPKSQPGKRKNQEEPNCPQ. Positions 459–468 are enriched in low complexity; that stretch reads INTSGSSVSS.

The sequence is that of DEP domain-containing protein 1A (depdc1a) from Danio rerio (Zebrafish).